Consider the following 102-residue polypeptide: UPF0122 protein MPN_424 (102 aa).

The protein belongs to the UPF0122 family.

Functionally, might take part in the signal recognition particle (SRP) pathway. This is inferred from the conservation of its genetic proximity to ftsY/ffh. May be a regulatory protein. The chain is UPF0122 protein MPN_424 from Mycoplasma pneumoniae (strain ATCC 29342 / M129 / Subtype 1) (Mycoplasmoides pneumoniae).